The sequence spans 120 residues: Small ribosomal subunit protein uS17m (120 aa).

A mitochondrion-targeting transit peptide spans 1–20 (MSIVRSSVHAKWVVGKVIGT).

This sequence belongs to the universal ribosomal protein uS17 family. As to quaternary structure, component of the mitochondrial ribosome small subunit (28S) which comprises a 12S rRNA and about 30 distinct proteins.

It localises to the mitochondrion. This is Small ribosomal subunit protein uS17m (Mrps17) from Mus musculus (Mouse).